An 855-amino-acid polypeptide reads, in one-letter code: DNA mismatch repair protein MutS (855 aa).

Residue 616-623 participates in ATP binding; it reads GPNMGGKS.

This sequence belongs to the DNA mismatch repair MutS family.

Its function is as follows. This protein is involved in the repair of mismatches in DNA. It is possible that it carries out the mismatch recognition step. This protein has a weak ATPase activity. This is DNA mismatch repair protein MutS from Salmonella newport (strain SL254).